A 958-amino-acid chain; its full sequence is Coiled-coil domain-containing protein 187 (958 aa).

Residues 116–132 (SSVSSGRMSGSSGGHES) show a composition bias toward low complexity. Disordered stretches follow at residues 116-160 (SSVS…SDPR), 345-447 (ELTR…PRFF), 470-492 (QDIS…QRPW), and 510-602 (EPSP…KAQA). 2 stretches are compositionally biased toward polar residues: residues 374–398 (LQST…NSSL) and 470–491 (QDIS…SQRP). Low complexity predominate over residues 536–545 (SSPSSKGKSA). Residues 718–743 (KQARLQALETMAEALRQRVDILTTKL) are a coiled coil. Residues 916–958 (EVKKEGLVTPWTTRSCGKGEPADRPWAGWSGGQGGLPWASSTA) form a disordered region.

The polypeptide is Coiled-coil domain-containing protein 187 (Mus musculus (Mouse)).